A 609-amino-acid chain; its full sequence is MPEILNHTLILEKIKNLGASPGCYLWKSKKGEVLYVGKAKNLDKRVRSYLKENHPDVKTKVLQREIFDLDWIATGTEKEALILEATLIKKHNPRFNVRLKDDKKYPYICVSLSEPYPMVYVTRKLKDNGDRYFGPYSDVKSTRETLDIILRIFPVRKTRQVLPLPRPRRPCLNFDMGRCLGPCQGNIPVEDYKVIIDQVIQFLEGRKESLVSDLNIKMSNASERLDFEKAARYRDMLQRIQNFREKQTVVSLEGGDEDVIGFARKQDEGQVILLEIRGGRLETKKSFPIQGVLDAENSEILGAFFRDYYLNASLVPPCIFIPADIQDEVIPVIDVLQEKTGFRPKIKFPKGGDKRSLLKIAEKNAELGLSERLLATHYRDQTASLKEIQEMFSLERLPHIIECYDISHFQGSQPVASGVMFVEGKPFKQGYRKYNIQGYEGINDPGMIHEVISRRLQRIINEEGVFPDLIVIDGGLTQLTKACEAAVEAGAEGIPMVGLAKKREEIFFPGENEPFIFDMNSPGMKLLRHLRDEAHRFGVSHHRSRRNKETMRSLIQEVPDIGFKRSKLLLQHFSGEKKIEEATKEELLLVPGIGENLAEKILKQLQKKE.

Residues 19–97 (ASPGCYLWKS…IKKHNPRFNV (79 aa)) form the GIY-YIG domain. Residues 208–243 (ESLVSDLNIKMSNASERLDFEKAARYRDMLQRIQNF) enclose the UVR domain.

The protein belongs to the UvrC family. In terms of assembly, interacts with UvrB in an incision complex.

The protein resides in the cytoplasm. The UvrABC repair system catalyzes the recognition and processing of DNA lesions. UvrC both incises the 5' and 3' sides of the lesion. The N-terminal half is responsible for the 3' incision and the C-terminal half is responsible for the 5' incision. The chain is UvrABC system protein C from Leptospira interrogans serogroup Icterohaemorrhagiae serovar Lai (strain 56601).